Consider the following 120-residue polypeptide: uncharacterized protein (120 aa).

It belongs to the asp23 family.

This is an uncharacterized protein from Bacillus subtilis (strain 168).